The following is a 480-amino-acid chain: GTPase Obg (480 aa).

The region spanning Thr2–Val159 is the Obg domain. Positions Ala160–Ala341 constitute an OBG-type G domain. Residues Gly166 to Ser173, Phe191 to Ala195, Asp212 to Gly215, Asn292 to Asp295, and Ser322 to Val324 each bind GTP. Mg(2+) is bound by residues Ser173 and Thr193. The region spanning Pro359–Pro437 is the OCT domain. The tract at residues Ala441 to Glu480 is disordered. Basic and acidic residues predominate over residues Thr452 to Lys468. The segment covering Ala469–Glu480 has biased composition (basic residues).

The protein belongs to the TRAFAC class OBG-HflX-like GTPase superfamily. OBG GTPase family. Monomer. Requires Mg(2+) as cofactor.

It is found in the cytoplasm. Its function is as follows. An essential GTPase which binds GTP, GDP and possibly (p)ppGpp with moderate affinity, with high nucleotide exchange rates and a fairly low GTP hydrolysis rate. Plays a role in control of the cell cycle, stress response, ribosome biogenesis and in those bacteria that undergo differentiation, in morphogenesis control. The sequence is that of GTPase Obg from Mycolicibacterium vanbaalenii (strain DSM 7251 / JCM 13017 / BCRC 16820 / KCTC 9966 / NRRL B-24157 / PYR-1) (Mycobacterium vanbaalenii).